The chain runs to 203 residues: Transmembrane protein 269 (203 aa).

The next 3 membrane-spanning stretches (helical) occupy residues 60-80, 124-144, and 157-177; these read GLAS…LAII, FILC…SYYP, and LVYI…SAFY.

The protein localises to the membrane. The protein is Transmembrane protein 269 of Homo sapiens (Human).